A 321-amino-acid chain; its full sequence is GTP 3',8-cyclase (321 aa).

The Radical SAM core domain occupies serine 5 to serine 227. Arginine 14 serves as a coordination point for GTP. Cysteine 21 and cysteine 25 together coordinate [4Fe-4S] cluster. Tyrosine 27 is a binding site for S-adenosyl-L-methionine. A [4Fe-4S] cluster-binding site is contributed by cysteine 28. Residue arginine 64 coordinates GTP. Glycine 68 contacts S-adenosyl-L-methionine. Threonine 95 is a GTP binding site. Serine 119 contacts S-adenosyl-L-methionine. Residue lysine 155 coordinates GTP. Residue methionine 189 participates in S-adenosyl-L-methionine binding. [4Fe-4S] cluster is bound by residues cysteine 249 and cysteine 252. Arginine 254–arginine 256 serves as a coordination point for GTP. Cysteine 266 provides a ligand contact to [4Fe-4S] cluster.

It belongs to the radical SAM superfamily. MoaA family. Monomer and homodimer. [4Fe-4S] cluster is required as a cofactor.

It catalyses the reaction GTP + AH2 + S-adenosyl-L-methionine = (8S)-3',8-cyclo-7,8-dihydroguanosine 5'-triphosphate + 5'-deoxyadenosine + L-methionine + A + H(+). The protein operates within cofactor biosynthesis; molybdopterin biosynthesis. Catalyzes the cyclization of GTP to (8S)-3',8-cyclo-7,8-dihydroguanosine 5'-triphosphate. The sequence is that of GTP 3',8-cyclase from Sulfurimonas denitrificans (strain ATCC 33889 / DSM 1251) (Thiomicrospira denitrificans (strain ATCC 33889 / DSM 1251)).